Here is a 371-residue protein sequence, read N- to C-terminus: Barbiturase 1 (371 aa).

The segment at 1 to 103 (MPDAIEVRKV…TIFATVPPED (103 aa)) is RU A. Residues Arg-53 and 82 to 83 (SG) each bind substrate. Residues 115–250 (RLTVGFAMSE…AQVVVVGNAP (136 aa)) are RU B. Lys-165 is an active-site residue. Residues Asn-197 and 233–234 (SS) each bind substrate. Ser-233 functions as the Nucleophile in the catalytic mechanism. Residues 256–371 (YRIGHSVMKD…GPVAAIVDLG (116 aa)) are RU C. Glu-304 lines the Mg(2+) pocket. Residues Lys-331 and 350 to 351 (SV) each bind substrate. Positions 353, 356, 357, 358, and 361 each coordinate Mg(2+).

Belongs to the cyclic amide hydrolase (CyAH) family. In terms of assembly, homotetramer.

It carries out the reaction barbiturate + H2O = 3-oxo-3-ureidopropanoate. It functions in the pathway pyrimidine metabolism; uracil degradation via oxidative pathway; malonate and urea from uracil: step 2/3. With respect to regulation, inhibited by cyanuric acid. Its function is as follows. Responsible for the hydrolysis of barbituric acid (2,4,6-trihydroxy-1,3-pyrimidine), an intermediate in the oxidative catabolism of pyrimidines. Catalyzes the hydrolytic opening of the pyrimidine ring of barbituric acid to yield ureidomalonic acid. The protein is Barbiturase 1 of Nocardioides sp. (strain ATCC BAA-499 / JS614).